The following is a 562-amino-acid chain: NAD-dependent malic enzyme (562 aa).

Catalysis depends on tyrosine 101, which acts as the Proton donor. Arginine 154 provides a ligand contact to NAD(+). Lysine 172 serves as the catalytic Proton acceptor. The a divalent metal cation site is built by glutamate 243, aspartate 244, and aspartate 267. NAD(+)-binding residues include aspartate 267 and asparagine 415.

The protein belongs to the malic enzymes family. Homotetramer. Mg(2+) serves as cofactor. Mn(2+) is required as a cofactor.

The enzyme catalyses (S)-malate + NAD(+) = pyruvate + CO2 + NADH. The catalysed reaction is oxaloacetate + H(+) = pyruvate + CO2. In Shewanella oneidensis (strain ATCC 700550 / JCM 31522 / CIP 106686 / LMG 19005 / NCIMB 14063 / MR-1), this protein is NAD-dependent malic enzyme.